Consider the following 486-residue polypeptide: Wax ester synthase/diacylglycerol acyltransferase 11 (486 aa).

The Cytoplasmic portion of the chain corresponds to 1-192 (MGEDKKTARE…CNSGFFNKIW (192 aa)). His-144 serves as the catalytic Proton acceptor. The helical transmembrane segment at 193 to 213 (WLFVGLWFILRLLFNTFVDIL) threads the bilayer. Topologically, residues 214-486 (MFALTIFVLR…LERGLYEIEV (273 aa)) are extracellular.

This sequence in the N-terminal section; belongs to the long-chain O-acyltransferase family. As to expression, mostly expressed in inflorescences and flowers, especially at the periphery of petal epidermal cells.

The protein localises to the cell membrane. The protein resides in the endoplasmic reticulum membrane. The catalysed reaction is an acyl-CoA + a 1,2-diacyl-sn-glycerol = a triacyl-sn-glycerol + CoA. The enzyme catalyses a long chain fatty alcohol + a fatty acyl-CoA = a wax ester + CoA. It participates in glycerolipid metabolism; triacylglycerol biosynthesis. Its pathway is lipid metabolism. In terms of biological role, bifunctional wax ester synthase/diacylglycerol acyltransferase. Involved in cuticular wax biosynthesis. Required for petals development, probably by mediating the production of fatty acids at the plasma membrane in the petal epidermis acting as lubricants that makes petal elongation smooth in narrow space between the sepals and the anthers inside floral buds. The sequence is that of Wax ester synthase/diacylglycerol acyltransferase 11 from Arabidopsis thaliana (Mouse-ear cress).